The primary structure comprises 239 residues: Ribosomal RNA small subunit methyltransferase G (239 aa).

S-adenosyl-L-methionine contacts are provided by residues G78, F83, 129-130 (AE), and R148.

The protein belongs to the methyltransferase superfamily. RNA methyltransferase RsmG family.

Its subcellular location is the cytoplasm. Specifically methylates the N7 position of a guanine in 16S rRNA. In Alkaliphilus metalliredigens (strain QYMF), this protein is Ribosomal RNA small subunit methyltransferase G.